We begin with the raw amino-acid sequence, 307 residues long: Ninja-family protein 5 (307 aa).

2 disordered regions span residues 1-159 (MASR…EHTV) and 173-208 (TAGSPTPSRPQQGPADRRAAEATGPDGAACHDEPQP). Residues 8–30 (GGFGRDGGQAPVGGAGAAPGPGG) are compositionally biased toward gly residues. 2 stretches are compositionally biased toward polar residues: residues 63 to 83 (QRSSSVASICSLPAATTGTSC) and 173 to 183 (TAGSPTPSRPQ).

Belongs to the Ninja family.

Its subcellular location is the nucleus. The chain is Ninja-family protein 5 from Zea mays (Maize).